The primary structure comprises 186 residues: Large ribosomal subunit protein uL5 (186 aa).

It belongs to the universal ribosomal protein uL5 family. In terms of assembly, part of the 50S ribosomal subunit; part of the 5S rRNA/L5/L18/L25 subcomplex. Contacts the 5S rRNA and the P site tRNA. Forms a bridge to the 30S subunit in the 70S ribosome.

Its function is as follows. This is one of the proteins that bind and probably mediate the attachment of the 5S RNA into the large ribosomal subunit, where it forms part of the central protuberance. In the 70S ribosome it contacts protein S13 of the 30S subunit (bridge B1b), connecting the 2 subunits; this bridge is implicated in subunit movement. Contacts the P site tRNA; the 5S rRNA and some of its associated proteins might help stabilize positioning of ribosome-bound tRNAs. The sequence is that of Large ribosomal subunit protein uL5 from Cereibacter sphaeroides (strain ATCC 17029 / ATH 2.4.9) (Rhodobacter sphaeroides).